The primary structure comprises 268 residues: Phosphonates import ATP-binding protein PhnC (268 aa).

The ABC transporter domain occupies 11–254 (LHAEAVTKRF…EVMAIYQRAE (244 aa)). 43-50 (GLSGSGKS) provides a ligand contact to ATP.

It belongs to the ABC transporter superfamily. Phosphonates importer (TC 3.A.1.9.1) family. As to quaternary structure, the complex is composed of two ATP-binding proteins (PhnC), two transmembrane proteins (PhnE) and a solute-binding protein (PhnD).

The protein resides in the cell membrane. It carries out the reaction phosphonate(out) + ATP + H2O = phosphonate(in) + ADP + phosphate + H(+). Functionally, part of the ABC transporter complex PhnCDE involved in phosphonates import. Responsible for energy coupling to the transport system. This Nocardia farcinica (strain IFM 10152) protein is Phosphonates import ATP-binding protein PhnC.